The chain runs to 177 residues: Nucleoside triphosphate/diphosphate phosphatase (177 aa).

Arg23 acts as the Proton donor in catalysis. Asn87, Asp103, Asp105, Asp107, Asp120, and Glu123 together coordinate Mg(2+).

Belongs to the Ntdp family. It depends on Mg(2+) as a cofactor.

It catalyses the reaction a ribonucleoside 5'-triphosphate + H2O = a ribonucleoside 5'-diphosphate + phosphate + H(+). It carries out the reaction a ribonucleoside 5'-diphosphate + H2O = a ribonucleoside 5'-phosphate + phosphate + H(+). In terms of biological role, has nucleoside phosphatase activity towards nucleoside triphosphates and nucleoside diphosphates. The protein is Nucleoside triphosphate/diphosphate phosphatase of Streptococcus pneumoniae (strain ATCC 700669 / Spain 23F-1).